The primary structure comprises 394 residues: 1-deoxy-D-xylulose 5-phosphate reductoisomerase (394 aa).

Thr-28, Gly-29, Ser-30, Ile-31, Asn-57, and Asn-133 together coordinate NADPH. Lys-134 lines the 1-deoxy-D-xylulose 5-phosphate pocket. Position 135 (Glu-135) interacts with NADPH. Position 157 (Asp-157) interacts with Mn(2+). 4 residues coordinate 1-deoxy-D-xylulose 5-phosphate: Ser-158, Glu-159, Ser-183, and His-206. A Mn(2+)-binding site is contributed by Glu-159. NADPH is bound at residue Gly-212. 1-deoxy-D-xylulose 5-phosphate contacts are provided by Ser-219, Asn-224, Lys-225, and Glu-228. Glu-228 serves as a coordination point for Mn(2+).

Belongs to the DXR family. Mg(2+) is required as a cofactor. The cofactor is Mn(2+).

The enzyme catalyses 2-C-methyl-D-erythritol 4-phosphate + NADP(+) = 1-deoxy-D-xylulose 5-phosphate + NADPH + H(+). Its pathway is isoprenoid biosynthesis; isopentenyl diphosphate biosynthesis via DXP pathway; isopentenyl diphosphate from 1-deoxy-D-xylulose 5-phosphate: step 1/6. Its function is as follows. Catalyzes the NADPH-dependent rearrangement and reduction of 1-deoxy-D-xylulose-5-phosphate (DXP) to 2-C-methyl-D-erythritol 4-phosphate (MEP). This is 1-deoxy-D-xylulose 5-phosphate reductoisomerase from Nocardia farcinica (strain IFM 10152).